Consider the following 254-residue polypeptide: RING-H2 finger protein ATL28 (254 aa).

The chain crosses the membrane as a helical span at residues 25–45 (VVLTGVLLFVIFAGFFSLFLW). The RING-type; atypical zinc finger occupies 103–145 (CAICLSEFSDEDTVRLITVCRHPFHSNCIDLWFELHKTCPVCR).

Belongs to the RING-type zinc finger family. ATL subfamily.

It localises to the membrane. It catalyses the reaction S-ubiquitinyl-[E2 ubiquitin-conjugating enzyme]-L-cysteine + [acceptor protein]-L-lysine = [E2 ubiquitin-conjugating enzyme]-L-cysteine + N(6)-ubiquitinyl-[acceptor protein]-L-lysine.. Its pathway is protein modification; protein ubiquitination. This chain is RING-H2 finger protein ATL28 (ATL28), found in Arabidopsis thaliana (Mouse-ear cress).